The sequence spans 1360 residues: Zinc finger protein GLI1 (1360 aa).

The segment at 198-245 is disordered; the sequence is DTIGSKRLEDGSEGDISSPASVGTQDPLLGLLDGRDDLEKDDGKHEPE. Basic and acidic residues predominate over residues 230 to 245; the sequence is DGRDDLEKDDGKHEPE. Residues 250–275 form a C2H2-type 1 zinc finger; it reads TNCHWESCTKEFDTQEHLVHHINNEH. Residues 298–306 form an interaction with DNA region; that stretch reads KAQYMLVVH. C2H2-type zinc fingers lie at residues 316-340, 346-371, and 377-402; these read HKCT…LRSH, YVCE…NRTH, and YVCK…KTVH. Interaction with DNA regions lie at residues 360–365 and 390–396; these read ASDRAK and DPSSLRK. Disordered stretches follow at residues 390 to 434, 457 to 500, 718 to 740, and 1120 to 1213; these read DPSS…NVKG, ITLK…SFED, IIHP…RTGG, and YMNY…IQPQ. A compositionally biased stretch (low complexity) spans 461–473; the sequence is SQPSPGGQSSCSS. Residues 474 to 496 are compositionally biased toward polar residues; that stretch reads ERSPLGSTNNNDSGVEMNANTGG. Residues 1134-1143 are compositionally biased toward low complexity; the sequence is SPSSQDSQSS. Over residues 1173–1190 the composition is skewed to polar residues; the sequence is RQHSVSSQSTYMGSPNQL.

It belongs to the GLI C2H2-type zinc-finger protein family.

Its subcellular location is the cytoplasm. The protein localises to the nucleus. Functionally, acts as a transcriptional activator. Binds to the DNA consensus sequence 5'-GACCACCCA-3'. May regulate the transcription of specific genes during normal development. Mediates SHH signaling. Plays a role in cell proliferation and differentiation via its role in SHH signaling. In Xenopus laevis (African clawed frog), this protein is Zinc finger protein GLI1 (gli1).